The primary structure comprises 265 residues: Glutamate racemase (265 aa).

Residues 12–13 (DS) and 44–45 (YG) contribute to the substrate site. C75 (proton donor/acceptor) is an active-site residue. 76 to 77 (NT) provides a ligand contact to substrate. Catalysis depends on C183, which acts as the Proton donor/acceptor. 184–185 (TH) contacts substrate.

This sequence belongs to the aspartate/glutamate racemases family.

The enzyme catalyses L-glutamate = D-glutamate. Its pathway is cell wall biogenesis; peptidoglycan biosynthesis. Its function is as follows. Provides the (R)-glutamate required for cell wall biosynthesis. This Carboxydothermus hydrogenoformans (strain ATCC BAA-161 / DSM 6008 / Z-2901) protein is Glutamate racemase.